A 591-amino-acid chain; its full sequence is Probable translation initiation factor IF-2 (591 aa).

Residues 7-223 (LRTPIVCVMG…LLGLAQKFLE (217 aa)) form the tr-type G domain. The segment at 16–23 (GHVDHGKT) is G1. Residue 16–23 (GHVDHGKT) coordinates GTP. The interval 41-45 (AITQH) is G2. Residues 78–81 (DTPG) are G3. GTP is bound by residues 78–82 (DTPGH) and 132–135 (NKID). The segment at 132-135 (NKID) is G4. The tract at residues 200–202 (SAM) is G5.

It belongs to the TRAFAC class translation factor GTPase superfamily. Classic translation factor GTPase family. IF-2 subfamily.

In terms of biological role, function in general translation initiation by promoting the binding of the formylmethionine-tRNA to ribosomes. Seems to function along with eIF-2. The protein is Probable translation initiation factor IF-2 of Methanosarcina barkeri (strain Fusaro / DSM 804).